A 276-amino-acid polypeptide reads, in one-letter code: Probable endonuclease 4 (276 aa).

Zn(2+)-binding residues include histidine 65, histidine 105, glutamate 141, aspartate 175, histidine 178, histidine 210, aspartate 223, histidine 225, and glutamate 255.

Belongs to the AP endonuclease 2 family. Requires Zn(2+) as cofactor.

The enzyme catalyses Endonucleolytic cleavage to 5'-phosphooligonucleotide end-products.. Endonuclease IV plays a role in DNA repair. It cleaves phosphodiester bonds at apurinic or apyrimidinic (AP) sites, generating a 3'-hydroxyl group and a 5'-terminal sugar phosphate. The protein is Probable endonuclease 4 of Symbiobacterium thermophilum (strain DSM 24528 / JCM 14929 / IAM 14863 / T).